The following is a 358-amino-acid chain: MATDDASFPWDQDSILSRDLLSALSSQLCYENLNRSCIRSPYSPGPRLILHAVFGFSAVLAVCGNLLVMTSILHFRQLHSPANFLVASLACADLLVGLTVMPFSMVRSVEGCWYFGDIYCKFHSSFDVSFCYSSIFHLCFISVDRYIAVSDPLIYLTRFTASVSGKCITFSWFLSIIYSFSLLYTGASEAGLEDLVSALTCVGGCQLAVNQSWVFINFLLFLVPTLVMMTVYSKVFLIAKQQAQNIEKIGKQTARASESYKDRVAKRERKAAKTLGITVAAFLLSWLPYFIDSIIDAFLGFITPTYVYEILVWIAYYNSAMNPLIYAFFYPWFRKAIKLIVTGKILRENSSATNLFPE.

Residues 1–47 (MATDDASFPWDQDSILSRDLLSALSSQLCYENLNRSCIRSPYSPGPR) are Extracellular-facing. An N-linked (GlcNAc...) asparagine glycan is attached at Asn34. Intrachain disulfides connect Cys37–Cys201 and Cys120–Cys205. A helical transmembrane segment spans residues 48–68 (LILHAVFGFSAVLAVCGNLLV). Topologically, residues 69–83 (MTSILHFRQLHSPAN) are cytoplasmic. A helical transmembrane segment spans residues 84 to 104 (FLVASLACADLLVGLTVMPFS). The Extracellular portion of the chain corresponds to 105–121 (MVRSVEGCWYFGDIYCK). The chain crosses the membrane as a helical span at residues 122 to 143 (FHSSFDVSFCYSSIFHLCFISV). Residues 144-166 (DRYIAVSDPLIYLTRFTASVSGK) lie on the Cytoplasmic side of the membrane. A helical membrane pass occupies residues 167–187 (CITFSWFLSIIYSFSLLYTGA). The Extracellular segment spans residues 188-212 (SEAGLEDLVSALTCVGGCQLAVNQS). Residue Asn210 is glycosylated (N-linked (GlcNAc...) asparagine). Residues 213–233 (WVFINFLLFLVPTLVMMTVYS) form a helical membrane-spanning segment. At 234–274 (KVFLIAKQQAQNIEKIGKQTARASESYKDRVAKRERKAAKT) the chain is on the cytoplasmic side. Residues 275–295 (LGITVAAFLLSWLPYFIDSII) traverse the membrane as a helical segment. Topologically, residues 296 to 309 (DAFLGFITPTYVYE) are extracellular. A helical membrane pass occupies residues 310-333 (ILVWIAYYNSAMNPLIYAFFYPWF). Residues 334 to 358 (RKAIKLIVTGKILRENSSATNLFPE) lie on the Cytoplasmic side of the membrane.

This sequence belongs to the G-protein coupled receptor 1 family.

The protein resides in the cell membrane. Functionally, olfactory receptor specific for N,N-dimethylalkylamines trace amines. Trace amine compounds are enriched in animal body fluids and act on trace amine-associated receptors (TAARs) to elicit both intraspecific and interspecific innate behaviors. Ligand-binding causes a conformation change that triggers signaling via G(s)-class of G alpha proteins (GNAL or GNAS). The chain is Trace amine-associated receptor 7e from Rattus norvegicus (Rat).